A 437-amino-acid chain; its full sequence is ATP-dependent protease ATPase subunit HslU (437 aa).

ATP is bound by residues valine 18, 60 to 65 (GCGKTE), aspartate 250, glutamate 315, and arginine 387.

Belongs to the ClpX chaperone family. HslU subfamily. A double ring-shaped homohexamer of HslV is capped on each side by a ring-shaped HslU homohexamer. The assembly of the HslU/HslV complex is dependent on binding of ATP.

It localises to the cytoplasm. ATPase subunit of a proteasome-like degradation complex; this subunit has chaperone activity. The binding of ATP and its subsequent hydrolysis by HslU are essential for unfolding of protein substrates subsequently hydrolyzed by HslV. HslU recognizes the N-terminal part of its protein substrates and unfolds these before they are guided to HslV for hydrolysis. The sequence is that of ATP-dependent protease ATPase subunit HslU from Methylobacterium nodulans (strain LMG 21967 / CNCM I-2342 / ORS 2060).